We begin with the raw amino-acid sequence, 223 residues long: GTP-binding nuclear protein Ran (223 aa).

A Small GTPase Ran-type domain is found at 8–172; that stretch reads VVAEFKLVLV…LWILRKLTGD (165 aa). 19-26 contacts GTP; sequence DGGVGKTT. The tract at residues 38–46 is switch-I; it reads KRYIATQGV. Residues Gly-69, 123-126, and 151-153 each bind GTP; these read NKVD and SAK. Positions 69-85 are switch-II; the sequence is GQEKLGGLREGYYIGAD.

Belongs to the small GTPase superfamily. Ran family. In terms of assembly, monomer. Found in a nuclear export complex with RanGTP, exportin and pre-miRNA.

It is found in the nucleus. In terms of biological role, GTP-binding protein involved in nucleocytoplasmic transport. Required for the import of protein into the nucleus and also for RNA export. Involved in chromatin condensation and control of cell cycle. The sequence is that of GTP-binding nuclear protein Ran from Tetrahymena pyriformis.